Reading from the N-terminus, the 251-residue chain is Pyrroloquinoline-quinone synthase (251 aa).

This sequence belongs to the PqqC family.

The enzyme catalyses 6-(2-amino-2-carboxyethyl)-7,8-dioxo-1,2,3,4,7,8-hexahydroquinoline-2,4-dicarboxylate + 3 O2 = pyrroloquinoline quinone + 2 H2O2 + 2 H2O + H(+). It participates in cofactor biosynthesis; pyrroloquinoline quinone biosynthesis. Functionally, ring cyclization and eight-electron oxidation of 3a-(2-amino-2-carboxyethyl)-4,5-dioxo-4,5,6,7,8,9-hexahydroquinoline-7,9-dicarboxylic-acid to PQQ. This is Pyrroloquinoline-quinone synthase from Pseudomonas putida (strain ATCC 47054 / DSM 6125 / CFBP 8728 / NCIMB 11950 / KT2440).